Here is a 218-residue protein sequence, read N- to C-terminus: Imidazole glycerol phosphate synthase subunit HisH (218 aa).

The 213-residue stretch at 1–213 (MTTIIDYGIG…AALPTTEEAG (213 aa)) folds into the Glutamine amidotransferase type-1 domain. The active-site Nucleophile is Cys79. Catalysis depends on residues His188 and Glu190.

As to quaternary structure, heterodimer of HisH and HisF.

The protein resides in the cytoplasm. The enzyme catalyses 5-[(5-phospho-1-deoxy-D-ribulos-1-ylimino)methylamino]-1-(5-phospho-beta-D-ribosyl)imidazole-4-carboxamide + L-glutamine = D-erythro-1-(imidazol-4-yl)glycerol 3-phosphate + 5-amino-1-(5-phospho-beta-D-ribosyl)imidazole-4-carboxamide + L-glutamate + H(+). It carries out the reaction L-glutamine + H2O = L-glutamate + NH4(+). It functions in the pathway amino-acid biosynthesis; L-histidine biosynthesis; L-histidine from 5-phospho-alpha-D-ribose 1-diphosphate: step 5/9. Its function is as follows. IGPS catalyzes the conversion of PRFAR and glutamine to IGP, AICAR and glutamate. The HisH subunit catalyzes the hydrolysis of glutamine to glutamate and ammonia as part of the synthesis of IGP and AICAR. The resulting ammonia molecule is channeled to the active site of HisF. The chain is Imidazole glycerol phosphate synthase subunit HisH from Salinibacter ruber (strain DSM 13855 / M31).